The sequence spans 795 residues: Phenylalanine--tRNA ligase beta subunit (795 aa).

Residues 39–148 (AAEFNGVVIG…LDAPLGTDLR (110 aa)) enclose the tRNA-binding domain. Residues 401-476 (PKPAQILLRR…RIYGYNNIPN (76 aa)) form the B5 domain. Mg(2+) contacts are provided by aspartate 454, aspartate 460, glutamate 463, and glutamate 464. One can recognise an FDX-ACB domain in the interval 701–794 (SKFPANRRDI…LKTEFNASLR (94 aa)).

The protein belongs to the phenylalanyl-tRNA synthetase beta subunit family. Type 1 subfamily. In terms of assembly, tetramer of two alpha and two beta subunits. Mg(2+) serves as cofactor.

It is found in the cytoplasm. It catalyses the reaction tRNA(Phe) + L-phenylalanine + ATP = L-phenylalanyl-tRNA(Phe) + AMP + diphosphate + H(+). The protein is Phenylalanine--tRNA ligase beta subunit of Shewanella oneidensis (strain ATCC 700550 / JCM 31522 / CIP 106686 / LMG 19005 / NCIMB 14063 / MR-1).